A 265-amino-acid polypeptide reads, in one-letter code: Cytosolic Fe-S cluster assembly factor NUBP2 homolog (265 aa).

22–29 (GKGGVGKS) provides a ligand contact to ATP. Residues Cys-196 and Cys-199 each contribute to the [4Fe-4S] cluster site.

It belongs to the Mrp/NBP35 ATP-binding proteins family. NUBP2/CFD1 subfamily. As to quaternary structure, heterotetramer of 2 NUBP1 and 2 NUBP2 chains. Requires [4Fe-4S] cluster as cofactor.

Its subcellular location is the cytoplasm. In terms of biological role, component of the cytosolic iron-sulfur (Fe/S) protein assembly (CIA) machinery. Required for maturation of extramitochondrial Fe-S proteins. The NUBP1-NUBP2 heterotetramer forms a Fe-S scaffold complex, mediating the de novo assembly of an Fe-S cluster and its transfer to target apoproteins. The polypeptide is Cytosolic Fe-S cluster assembly factor NUBP2 homolog (Trichoplax adhaerens (Trichoplax reptans)).